We begin with the raw amino-acid sequence, 546 residues long: Tryptophan biosynthesis protein TrpCD (546 aa).

The interval 1 to 226 (MMDFGFVDSL…FVQTVCGGEK (226 aa)) is indole-3-glycerol phosphate synthase. The segment at 227 to 546 (MIEDVLRGLD…EEIACKSTSM (320 aa)) is anthranilate phosphoribosyltransferase. Residues Gly295, 298 to 299 (GD), Ser303, 305 to 308 (NVST), 322 to 330 (KHGNRAVSS), and Ser334 contribute to the 5-phospho-alpha-D-ribose 1-diphosphate site. An anthranilate-binding site is contributed by Gly295. A Mg(2+)-binding site is contributed by Ser307. Residue Asn325 coordinates anthranilate. Arg380 lines the anthranilate pocket. 2 residues coordinate Mg(2+): Asp437 and Glu438.

It in the N-terminal section; belongs to the TrpC family. The protein in the C-terminal section; belongs to the anthranilate phosphoribosyltransferase family. Mg(2+) is required as a cofactor.

It carries out the reaction 1-(2-carboxyphenylamino)-1-deoxy-D-ribulose 5-phosphate + H(+) = (1S,2R)-1-C-(indol-3-yl)glycerol 3-phosphate + CO2 + H2O. It catalyses the reaction N-(5-phospho-beta-D-ribosyl)anthranilate + diphosphate = 5-phospho-alpha-D-ribose 1-diphosphate + anthranilate. Its pathway is amino-acid biosynthesis; L-tryptophan biosynthesis; L-tryptophan from chorismate: step 2/5. The protein operates within amino-acid biosynthesis; L-tryptophan biosynthesis; L-tryptophan from chorismate: step 4/5. In terms of biological role, bifunctional enzyme that catalyzes the second and fourth steps of tryptophan biosynthetic pathway. The second step is catalyzed by the anthranilate phosphoribosyltransferase, coded by the TrpD domain and the fourth step is catalyzed by indole-3-glycerol phosphate synthase, coded by the TrpC domain. This chain is Tryptophan biosynthesis protein TrpCD (trpCD), found in Archaeoglobus fulgidus (strain ATCC 49558 / DSM 4304 / JCM 9628 / NBRC 100126 / VC-16).